The primary structure comprises 372 residues: Aminomethyltransferase (372 aa).

It belongs to the GcvT family. The glycine cleavage system is composed of four proteins: P, T, L and H.

It catalyses the reaction N(6)-[(R)-S(8)-aminomethyldihydrolipoyl]-L-lysyl-[protein] + (6S)-5,6,7,8-tetrahydrofolate = N(6)-[(R)-dihydrolipoyl]-L-lysyl-[protein] + (6R)-5,10-methylene-5,6,7,8-tetrahydrofolate + NH4(+). In terms of biological role, the glycine cleavage system catalyzes the degradation of glycine. The protein is Aminomethyltransferase of Burkholderia orbicola (strain MC0-3).